Consider the following 425-residue polypeptide: E3 ubiquitin-protein ligase GW2 (425 aa).

Residues 62–105 (CPICFLYYPSLNRSKCCSKGICTECFLQMKPTHTAQPTQCPFCK) form an RING-type; degenerate zinc finger.

In terms of tissue distribution, expressed in roots, shoots, leaves, inflorescence meristems, stamens, pistils, spikelet hulls and endosperms 4 days after fertilization.

The protein localises to the cytoplasm. It catalyses the reaction S-ubiquitinyl-[E2 ubiquitin-conjugating enzyme]-L-cysteine + [acceptor protein]-L-lysine = [E2 ubiquitin-conjugating enzyme]-L-cysteine + N(6)-ubiquitinyl-[acceptor protein]-L-lysine.. It participates in protein modification; protein ubiquitination. Functionally, E3 ubiquitin-protein ligase involved in the regulation of grain size. May limit grain width and weight by restricting cell proliferation of the spikelet hull. Possesses E3 ubiquitin-protein ligase activity in vitro. This is E3 ubiquitin-protein ligase GW2 from Oryza sativa subsp. indica (Rice).